The primary structure comprises 1221 residues: DNA-directed RNA polymerase subunit beta (1221 aa).

Residues 1176–1221 form a disordered region; sequence EKKKLAEEEAEIAAEAEAEGSAEEDAAEADADANEAETADDDKASK. Residues 1183-1215 are compositionally biased toward acidic residues; it reads EEAEIAAEAEAEGSAEEDAAEADADANEAETAD.

The protein belongs to the RNA polymerase beta chain family. In terms of assembly, the RNAP catalytic core consists of 2 alpha, 1 beta, 1 beta' and 1 omega subunit. When a sigma factor is associated with the core the holoenzyme is formed, which can initiate transcription.

It catalyses the reaction RNA(n) + a ribonucleoside 5'-triphosphate = RNA(n+1) + diphosphate. In terms of biological role, DNA-dependent RNA polymerase catalyzes the transcription of DNA into RNA using the four ribonucleoside triphosphates as substrates. The sequence is that of DNA-directed RNA polymerase subunit beta from Lactobacillus delbrueckii subsp. bulgaricus (strain ATCC BAA-365 / Lb-18).